Consider the following 243-residue polypeptide: 7-cyano-7-deazaguanine synthase (243 aa).

14 to 24 lines the ATP pocket; sequence FSGGQDSATCL. C202, C217, C220, and C223 together coordinate Zn(2+).

This sequence belongs to the QueC family. Zn(2+) serves as cofactor.

It catalyses the reaction 7-carboxy-7-deazaguanine + NH4(+) + ATP = 7-cyano-7-deazaguanine + ADP + phosphate + H2O + H(+). Its pathway is purine metabolism; 7-cyano-7-deazaguanine biosynthesis. Functionally, catalyzes the ATP-dependent conversion of 7-carboxy-7-deazaguanine (CDG) to 7-cyano-7-deazaguanine (preQ(0)). This is 7-cyano-7-deazaguanine synthase from Paraburkholderia phymatum (strain DSM 17167 / CIP 108236 / LMG 21445 / STM815) (Burkholderia phymatum).